A 623-amino-acid polypeptide reads, in one-letter code: Cilia- and flagella-associated protein 52 (623 aa).

WD repeat units follow at residues 65–109 (GHGN…LMAR), 112–153 (LHKG…AICG), 159–198 (LNVG…RKIW), 291–330 (QLQG…ETLI), 333–372 (CHFE…ELLR), 375–414 (VPNM…LMYV), 418–457 (AHRI…QKLE), 462–501 (EHKS…RNQM), 503–544 (LANT…RELD), 546–585 (SLSG…VTHV), and 588–623 (GHSG…PFPS).

It belongs to the CFAP52 family. As to quaternary structure, microtubule inner protein component of sperm flagellar doublet microtubules. Interacts with BRCA2. Interacts with the CCT chaperonin complex. Interacts with HSP70. Interacts with AK8. Interacts with CFAP45. Interacts with DNAI1. Interacts with IQDC. In terms of tissue distribution, expressed in trachea multiciliated cells.

It is found in the cytoplasm. Its subcellular location is the cytoskeleton. It localises to the cilium axoneme. The protein resides in the flagellum axoneme. Its function is as follows. Microtubule inner protein (MIP) part of the dynein-decorated doublet microtubules (DMTs) in cilia axoneme. Important for proper ciliary and flagellar beating. May act in cooperation with CFAP45 and axonemal dynein subunit DNAH11. May play a role in cell growth and/or survival. In Bos taurus (Bovine), this protein is Cilia- and flagella-associated protein 52 (CFAP52).